The primary structure comprises 136 residues: MGSKGLKGVMVCLLILGLVLEHVQVEGKSCCRSTLGRNCYNLCRVRGAQKLCANACRCKLTSGLKCPSSFPKLALVSNSDEPDTIDYCNLGCRASMCDYMVNAAADDEEMKLYVEHCSDACVNFCNGDVGLTSLTA.

An N-terminal signal peptide occupies residues 1–27 (MGSKGLKGVMVCLLILGLVLEHVQVEG). Cystine bridges form between Cys-30–Cys-66, Cys-31–Cys-58, Cys-39–Cys-56, and Cys-43–Cys-52. Positions 73–136 (LALVSNSDEP…GDVGLTSLTA (64 aa)) are cleaved as a propeptide — acidic domain.

The protein belongs to the plant thionin (TC 1.C.44) family. 4 C-C subfamily. As to quaternary structure, homodimer.

It localises to the secreted. Thionins are small plant proteins which are toxic to animal cells. They seem to exert their toxic effect at the level of the cell membrane. Their precise function is not known. This chain is Beta-hordothionin (THI1.2), found in Hordeum vulgare (Barley).